The primary structure comprises 338 residues: Mitochondrial transcription factor 1 (338 aa).

S-adenosyl-L-methionine-binding residues include leucine 23, aspartate 76, aspartate 100, and asparagine 136.

It belongs to the class I-like SAM-binding methyltransferase superfamily. rRNA adenine N(6)-methyltransferase family.

The protein resides in the mitochondrion. In terms of biological role, mitochondrial transcription factor that confers selective promoter recognition on the core subunit of the yeast mitochondrial RNA polymerase. Interacts with DNA in a non-specific manner. The protein is Mitochondrial transcription factor 1 (MTF1) of Lachancea kluyveri (Yeast).